The chain runs to 192 residues: Large ribosomal subunit protein bL9 (192 aa).

Residues D172–A192 form a disordered region. Residues F179 to A192 show a composition bias toward acidic residues.

The protein belongs to the bacterial ribosomal protein bL9 family.

In terms of biological role, binds to the 23S rRNA. The sequence is that of Large ribosomal subunit protein bL9 from Rhizobium johnstonii (strain DSM 114642 / LMG 32736 / 3841) (Rhizobium leguminosarum bv. viciae).